The chain runs to 556 residues: Arginine--tRNA ligase 1 (556 aa).

The 'HIGH' region signature appears at 132 to 142 (ANPTGDLHLGH).

Belongs to the class-I aminoacyl-tRNA synthetase family. As to quaternary structure, monomer.

It is found in the cytoplasm. It carries out the reaction tRNA(Arg) + L-arginine + ATP = L-arginyl-tRNA(Arg) + AMP + diphosphate. This Bacillus anthracis protein is Arginine--tRNA ligase 1.